A 437-amino-acid polypeptide reads, in one-letter code: Carboxypeptidase A6 (437 aa).

An N-terminal signal peptide occupies residues Met1–Ser30. The propeptide at His31 to Arg129 is activation peptide. Asn89 and Asn153 each carry an N-linked (GlcNAc...) asparagine glycan. The 295-residue stretch at Val138–Leu432 folds into the Peptidase M14 domain. Zn(2+) is bound by residues His196 and Glu199. Residues His196–Glu199, Arg254, and Asn271–Arg272 each bind substrate. Cys265 and Cys288 form a disulfide bridge. His324 serves as a coordination point for Zn(2+). Residues Ala325 to Tyr326 and Tyr376 contribute to the substrate site. The Proton donor/acceptor role is filled by Glu398. An N-linked (GlcNAc...) asparagine glycan is attached at Asn427.

This sequence belongs to the peptidase M14 family. Requires Zn(2+) as cofactor. As to expression, expressed in the hippocampus, nucleus raphe, and cortex.

It localises to the secreted. The protein localises to the extracellular space. The protein resides in the extracellular matrix. Its function is as follows. May be involved in the proteolytic inactivation of enkephalins and neurotensin in some brain areas. May convert inactive angiotensin I into the biologically active angiotensin II. Releases a C-terminal amino acid, with preference for large hydrophobic C-terminal amino acids and shows only very weak activity toward small amino acids and histidine. The polypeptide is Carboxypeptidase A6 (CPA6) (Homo sapiens (Human)).